A 442-amino-acid chain; its full sequence is D-galactonate dehydratase family member SSLG_02014 (442 aa).

Residue His-161 coordinates substrate. The Proton donor/acceptor role is filled by Tyr-197. A Mg(2+)-binding site is contributed by Asp-246. Catalysis depends on His-248, which acts as the Proton donor/acceptor. Glu-272 and Glu-298 together coordinate Mg(2+). Residues Glu-298, Arg-319, His-348, Asp-352, and Glu-375 each coordinate substrate.

The protein belongs to the mandelate racemase/muconate lactonizing enzyme family. GalD subfamily. Mg(2+) serves as cofactor.

The catalysed reaction is D-mannonate = 2-dehydro-3-deoxy-D-gluconate + H2O. Has low D-mannonate dehydratase activity (in vitro), suggesting that this is not a physiological substrate and that it has no significant role in D-mannonate degradation in vivo. Has no detectable activity with a panel of 70 other acid sugars (in vitro). In Streptomyces sp. (strain SPB78), this protein is D-galactonate dehydratase family member SSLG_02014.